The primary structure comprises 181 residues: Methanesulfonate monooxygenase hydroxylase subunit beta (181 aa).

This sequence belongs to the bacterial ring-hydroxylating dioxygenase beta subunit family. In terms of assembly, the MSA monooxygenase system consists of 4 proteins: the 2 subunits of the hydroxylase component (MsmA and MsmB), a ferredoxin (MsmC) and a ferredoxin reductase (MsmD). The hydroxylase component consists of a 3 alpha (MsmA) and 3 beta (MsmB) subunits.

It is found in the cytoplasm. It carries out the reaction methanesulfonate + NADH + O2 = sulfite + formaldehyde + NAD(+) + H2O. With respect to regulation, MSAMO is inhibited by metal chelators (such as bathophenanthroline, bathocuprione, neocuprione, alpha-alpha-dipyridil and sodium EDTA) and by sodium azide, sodium arsenate and potassium cyanide. In terms of biological role, methanesulfonate monooxygenase (MSAMO) mediates the primary degradation of methanesulfonic acid (MSA) to produce formaldehyd and inorganic sulfite by initial hydroxylation of the carbon atom prior to spontaneous cleavage of the unstable hydroxymethanesulfonic acid. MSAMO has a restricted substrate range that includes only the short-chain aliphatic sulfonates (methane- to butanesulfonate) and excludes all larger molecules, such as arylsulfonates and aromatic sulfonates. All MSAMO components are required for enzyme activity. In Methylosulfonomonas methylovora, this protein is Methanesulfonate monooxygenase hydroxylase subunit beta.